Reading from the N-terminus, the 1224-residue chain is DNA-directed RNA polymerase subunit beta'' (1224 aa).

Positions 223, 297, 304, and 307 each coordinate Zn(2+).

The protein belongs to the RNA polymerase beta' chain family. RpoC2 subfamily. In plastids the minimal PEP RNA polymerase catalytic core is composed of four subunits: alpha, beta, beta', and beta''. When a (nuclear-encoded) sigma factor is associated with the core the holoenzyme is formed, which can initiate transcription. Zn(2+) serves as cofactor.

It is found in the plastid. The protein localises to the chloroplast. It carries out the reaction RNA(n) + a ribonucleoside 5'-triphosphate = RNA(n+1) + diphosphate. Functionally, DNA-dependent RNA polymerase catalyzes the transcription of DNA into RNA using the four ribonucleoside triphosphates as substrates. The chain is DNA-directed RNA polymerase subunit beta'' from Porphyra purpurea (Red seaweed).